The sequence spans 500 residues: L-aspartate semialdehyde sulfurtransferase (500 aa).

Cysteine 131 (cysteine persulfide intermediate) is an active-site residue. CBS domains lie at 384–441 and 446–500; these read MADF…IFDS and MTKK…ARRY.

The protein belongs to the L-aspartate semialdehyde sulfurtransferase family. As to quaternary structure, forms homodimers. May form a complex with MA_1822.

It carries out the reaction L-aspartate 4-semialdehyde + reduced 2[4Fe-4S]-[ferredoxin] + hydrogen sulfide + 3 H(+) = oxidized 2[4Fe-4S]-[ferredoxin] + L-homocysteine + H2O. The protein operates within amino-acid biosynthesis. Its function is as follows. Required for O-acetylhomoserine sulfhydrylase (OAHS)-independent homocysteine (Hcy) biosynthesis. Together with MA_1822, catalyzes the condensation of sulfide with aspartate semialdehyde to generate homocysteine. Likely functions through persulfide intermediate. The protein is L-aspartate semialdehyde sulfurtransferase of Methanosarcina acetivorans (strain ATCC 35395 / DSM 2834 / JCM 12185 / C2A).